A 149-amino-acid chain; its full sequence is Large ribosomal subunit protein bL9 (149 aa).

Belongs to the bacterial ribosomal protein bL9 family.

In terms of biological role, binds to the 23S rRNA. This Laribacter hongkongensis (strain HLHK9) protein is Large ribosomal subunit protein bL9.